Consider the following 150-residue polypeptide: Large ribosomal subunit protein uL15 (150 aa).

It belongs to the universal ribosomal protein uL15 family. Part of the 50S ribosomal subunit.

Functionally, binds to the 23S rRNA. This is Large ribosomal subunit protein uL15 from Rickettsia prowazekii (strain Madrid E).